Reading from the N-terminus, the 224-residue chain is Peroxiredoxin-6 (224 aa).

One can recognise a Thioredoxin domain in the interval 5–169; sequence LLLGDEAPNF…ILRVVDSLQL (165 aa). Positions 31-40 are required and sufficient for targeting to lysosomes and lamellar bodies; that stretch reads DSWGILFSHP. Phosphothreonine is present on T44. Catalysis depends on C47, which acts as the Cysteine sulfenic acid (-SOH) intermediate; for peroxidase activity. N6-acetyllysine is present on K63. Y89 is modified (phosphotyrosine). D140 acts as the For phospholipase activity in catalysis. A Phosphothreonine; by MAPK modification is found at T177. K209 carries the N6-acetyllysine; alternate modification. K209 carries the N6-succinyllysine; alternate modification.

The protein belongs to the peroxiredoxin family. Prx6 subfamily. In terms of assembly, homodimer. Interacts with GSTP1; mediates PRDX6 glutathionylation and regeneration. Interacts with APEX1. Interacts with STH. May interact with FAM168B. May interact with HTR2A. Phosphorylation at Thr-177 by MAP kinases increases the phospholipase activity of the enzyme. Phosphorylated form exhibits a greater lysophosphatidylcholine acyltransferase activity compared to the non-phosphorylated form. In terms of processing, irreversibly inactivated by overoxidation of Cys-47 to sulfinic acid (Cys-SO(2)H) and sulfonic acid (Cys-SO(3)H) forms upon oxidative stress.

The protein localises to the cytoplasm. Its subcellular location is the lysosome. It catalyses the reaction a hydroperoxide + 2 glutathione = an alcohol + glutathione disulfide + H2O. The catalysed reaction is a 1,2-diacyl-sn-glycero-3-phosphocholine + H2O = a 1-acyl-sn-glycero-3-phosphocholine + a fatty acid + H(+). The enzyme catalyses a 1-acyl-sn-glycero-3-phosphocholine + an acyl-CoA = a 1,2-diacyl-sn-glycero-3-phosphocholine + CoA. It carries out the reaction 1-hexadecanoyl-sn-glycero-3-phosphocholine + hexadecanoyl-CoA = 1,2-dihexadecanoyl-sn-glycero-3-phosphocholine + CoA. It catalyses the reaction 1,2-dihexadecanoyl-sn-glycero-3-phosphocholine + H2O = 1-hexadecanoyl-sn-glycero-3-phosphocholine + hexadecanoate + H(+). In terms of biological role, thiol-specific peroxidase that catalyzes the reduction of hydrogen peroxide and organic hydroperoxides to water and alcohols, respectively. Can reduce H(2)O(2) and short chain organic, fatty acid, and phospholipid hydroperoxides. Also has phospholipase activity, can therefore either reduce the oxidized sn-2 fatty acyl group of phospholipids (peroxidase activity) or hydrolyze the sn-2 ester bond of phospholipids (phospholipase activity). These activities are dependent on binding to phospholipids at acidic pH and to oxidized phospholipds at cytosolic pH. Plays a role in cell protection against oxidative stress by detoxifying peroxides and in phospholipid homeostasis. Exhibits acyl-CoA-dependent lysophospholipid acyltransferase which mediates the conversion of lysophosphatidylcholine (1-acyl-sn-glycero-3-phosphocholine or LPC) into phosphatidylcholine (1,2-diacyl-sn-glycero-3-phosphocholine or PC). Shows a clear preference for LPC as the lysophospholipid and for palmitoyl CoA as the fatty acyl substrate. The chain is Peroxiredoxin-6 (Prdx6) from Rattus norvegicus (Rat).